The chain runs to 388 residues: Probable pectin lyase F-1 (388 aa).

The N-terminal stretch at 1–19 (MKTATFSTLLALSASAVNA) is a signal peptide. Cys80 and Cys103 are joined by a disulfide. Asn126 is a glycosylation site (N-linked (GlcNAc...) asparagine). Residue Arg253 is part of the active site. A disulfide bridge connects residues Cys328 and Cys336.

The protein belongs to the polysaccharide lyase 1 family.

It localises to the secreted. It carries out the reaction Eliminative cleavage of (1-&gt;4)-alpha-D-galacturonan methyl ester to give oligosaccharides with 4-deoxy-6-O-methyl-alpha-D-galact-4-enuronosyl groups at their non-reducing ends.. Its function is as follows. Pectinolytic enzymes consist of four classes of enzymes: pectin lyase, polygalacturonase, pectin methylesterase and rhamnogalacturonase. Among pectinolytic enzymes, pectin lyase is the most important in depolymerization of pectin, since it cleaves internal glycosidic bonds of highly methylated pectins. The sequence is that of Probable pectin lyase F-1 (pelF-1) from Aspergillus terreus (strain NIH 2624 / FGSC A1156).